A 512-amino-acid polypeptide reads, in one-letter code: Class E vacuolar protein-sorting machinery protein HSE1 (512 aa).

In terms of domain architecture, VHS spans 22-153 (ATDETLTNDN…RLVNDYSQYS (132 aa)). Disordered regions lie at residues 153-180 (SAET…EDEL) and 200-253 (SYLN…ESQT). The span at 164 to 180 (AKKERSRQDKKKEEDEL) shows a compositional bias: basic and acidic residues. Residues 175–194 (KEEDELQRVLKLSLQEYERE) form the UIM domain. The span at 215 to 233 (QYQEQPRQQQQQQQVLQNQ) shows a compositional bias: low complexity. Residues 234–253 (PMHSTPTGQQSTQSPAESQT) are compositionally biased toward polar residues. The SH3 domain occupies 255–315 (ATVSKVRALY…PLNYVTPVVT (61 aa)). The interval 411 to 512 (RVTHQPSGMS…INNFPNVNNI (102 aa)) is disordered. Polar residues predominate over residues 429–476 (ASPTHSSFSQANPSMLHQQPTSSGFGNARGNSSNEYFHSQQVPPTSFN). Residues 502-512 (NINNFPNVNNI) are compositionally biased toward low complexity.

Belongs to the STAM family. As to quaternary structure, component of the ESCRT-0 complex composed of HSE1 and VPS27.

The protein resides in the endosome membrane. Its function is as follows. Component of the ESCRT-0 complex which is the sorting receptor for ubiquitinated cargo proteins at the multivesicular body (MVB). This Debaryomyces hansenii (strain ATCC 36239 / CBS 767 / BCRC 21394 / JCM 1990 / NBRC 0083 / IGC 2968) (Yeast) protein is Class E vacuolar protein-sorting machinery protein HSE1 (HSE1).